The following is a 150-amino-acid chain: Viral late gene transcription factor 2 (150 aa).

Belongs to the orthopoxvirus VLTF-2/OPG126 family. Interacts with itself. Interacts with the late transcription factors VLTF-1/OPG093.

In terms of biological role, acts with RNA polymerase to initiate transcription from late gene promoters. This chain is Viral late gene transcription factor 2 (OPG126), found in Vaccinia virus (strain Copenhagen) (VACV).